The chain runs to 97 residues: Putative septation protein SpoVG (97 aa).

This sequence belongs to the SpoVG family.

Essential for sporulation. Interferes with or is a negative regulator of the pathway leading to asymmetric septation. The protein is Putative septation protein SpoVG of Bacillus licheniformis (strain ATCC 14580 / DSM 13 / JCM 2505 / CCUG 7422 / NBRC 12200 / NCIMB 9375 / NCTC 10341 / NRRL NRS-1264 / Gibson 46).